We begin with the raw amino-acid sequence, 316 residues long: Biotin synthase (316 aa).

The 227-residue stretch at 42–268 folds into the Radical SAM core domain; it reads LCGESVDLCT…INPTAYIRMA (227 aa). Residues C60, C64, and C67 each contribute to the [4Fe-4S] cluster site. [2Fe-2S] cluster is bound by residues S104, C136, C196, and R266.

This sequence belongs to the radical SAM superfamily. Biotin synthase family. In terms of assembly, homodimer. The cofactor is [4Fe-4S] cluster. [2Fe-2S] cluster serves as cofactor.

It catalyses the reaction (4R,5S)-dethiobiotin + (sulfur carrier)-SH + 2 reduced [2Fe-2S]-[ferredoxin] + 2 S-adenosyl-L-methionine = (sulfur carrier)-H + biotin + 2 5'-deoxyadenosine + 2 L-methionine + 2 oxidized [2Fe-2S]-[ferredoxin]. Its pathway is cofactor biosynthesis; biotin biosynthesis; biotin from 7,8-diaminononanoate: step 2/2. Catalyzes the conversion of dethiobiotin (DTB) to biotin by the insertion of a sulfur atom into dethiobiotin via a radical-based mechanism. This chain is Biotin synthase, found in Clostridium beijerinckii (strain ATCC 51743 / NCIMB 8052) (Clostridium acetobutylicum).